A 295-amino-acid polypeptide reads, in one-letter code: Pyridoxal 5'-phosphate synthase subunit PdxS (295 aa).

Residue Asp25 coordinates D-ribose 5-phosphate. Lys82 acts as the Schiff-base intermediate with D-ribose 5-phosphate in catalysis. Gly154 contributes to the D-ribose 5-phosphate binding site. Arg166 contributes to the D-glyceraldehyde 3-phosphate binding site. D-ribose 5-phosphate contacts are provided by residues Gly215 and 236-237 (GS).

Belongs to the PdxS/SNZ family. In terms of assembly, in the presence of PdxT, forms a dodecamer of heterodimers.

The enzyme catalyses aldehydo-D-ribose 5-phosphate + D-glyceraldehyde 3-phosphate + L-glutamine = pyridoxal 5'-phosphate + L-glutamate + phosphate + 3 H2O + H(+). It participates in cofactor biosynthesis; pyridoxal 5'-phosphate biosynthesis. Catalyzes the formation of pyridoxal 5'-phosphate from ribose 5-phosphate (RBP), glyceraldehyde 3-phosphate (G3P) and ammonia. The ammonia is provided by the PdxT subunit. Can also use ribulose 5-phosphate and dihydroxyacetone phosphate as substrates, resulting from enzyme-catalyzed isomerization of RBP and G3P, respectively. This is Pyridoxal 5'-phosphate synthase subunit PdxS from Dictyoglomus turgidum (strain DSM 6724 / Z-1310).